We begin with the raw amino-acid sequence, 164 residues long: Neurotrophin-3 (164 aa).

An N-terminal signal peptide occupies residues 1–3; sequence IQS. Positions 4–118 are excised as a propeptide; the sequence is TSMDQGBLSE…GLNRTSRRKR (115 aa). Residues 89 to 126 form a disordered region; sequence LLSENTPLEPPPLYLTEEPMGLNRTSRRKRFAEGKSHR. A glycan (N-linked (GlcNAc...) asparagine) is linked at Asn-111.

It belongs to the NGF-beta family.

The protein localises to the secreted. Functionally, seems to promote the survival of visceral and proprioceptive sensory neurons. In Cylindrophis ruffus (Red-tailed pipe snake), this protein is Neurotrophin-3 (NTF3).